The chain runs to 2776 residues: A-kinase anchor protein 13 (2776 aa).

Disordered regions lie at residues 371 to 401 (KNKD…SCLQ), 452 to 518 (EPDA…TETT), 547 to 584 (PAEA…QSSP), 618 to 641 (TMPG…PAQS), 653 to 689 (EAGT…ESTM), 760 to 871 (VSQT…SPTA), 910 to 951 (ALGQ…IPGL), 995 to 1029 (GAAK…LPSG), 1431 to 1508 (LCDT…MDSI), 1527 to 1546 (PFRR…AEMN), and 1565 to 1603 (RRSF…FGGE). Over residues 389 to 401 (DSGSASHQDSCLQ) the composition is skewed to polar residues. Residues 493–515 (QNNKPQVGEGTKERLENSDSSTT) are important for interaction with PRKAR2A. A compositionally biased stretch (basic and acidic residues) spans 560-573 (PTEKPGMETQERGC). Residues 659-672 (AEATHQPSTVTSSG) show a composition bias toward polar residues. Residues 773-788 (SPPASSFSLASSPESE) are compositionally biased toward low complexity. S784 bears the Phosphoserine mark. At T809 the chain carries Phosphothreonine. Basic and acidic residues-rich tracts occupy residues 820–834 (DGPD…DKVG) and 914–940 (DGKD…EDQR). T941 is subject to Phosphothreonine. Residues 1005-1020 (TSLSADSKQKASSTEQ) are compositionally biased toward polar residues. A compositionally biased stretch (low complexity) spans 1433-1444 (DTTGSSSSTDDT). The span at 1454–1476 (GSDVSLPQTSKLNRSRNHQSANG) shows a compositional bias: polar residues. Phosphoserine is present on residues S1455, S1473, S1507, S1532, and S1569. An important for interaction with MAP2K3 region spans residues 1552–1678 (RALGHVVRRP…SRPFHSTSAN (127 aa)). Residues 1583–1594 (SSSLEMSSANSS) show a composition bias toward low complexity. Phosphoserine is present on residues S1608, S1611, and S1613. An N6-methyllysine modification is found at K1637. Residues 1711-1756 (TFSYIRNKMSSSKKSKEKEKEKDKIKEKEKDSKEKEKDKKTLNGHT) form a disordered region. The span at 1724–1751 (KSKEKEKEKDKIKEKEKDSKEKEKDKKT) shows a compositional bias: basic and acidic residues. The Phorbol-ester/DAG-type zinc-finger motif lies at 1754-1801 (GHTFSPIPIVGPISCSQCMKPFTNKDAYTCAGCGAFVHKGCRENLASC). Residues S1839, S1858, and S1892 each carry the phosphoserine modification. Residues 1882–2776 (MSNTWKFLSH…VPAEGEEIFC (895 aa)) form an interaction with ESR1 region. T1893 is modified (phosphothreonine). S1895 and S1908 each carry phosphoserine. The 198-residue stretch at 1957–2154 (KRQEVIYELM…KDVIGAVDSK (198 aa)) folds into the DH domain. The PH domain occupies 2194–2296 (KLVRDGSVFL…WIQIIQDTIN (103 aa)). S2308 and S2361 each carry phosphoserine. Residues 2308 to 2345 (SENEEEKKLLDTKARELKEQLQQKDQQILLLLEEKEMI) are a coiled coil. T2431 is subject to Phosphothreonine. Residues 2436-2471 (DCHQMNASKGGEKEEGDDGQDLRRTESDSGLKKGGN) are disordered. Positions 2455 to 2466 (QDLRRTESDSGL) are enriched in basic and acidic residues. S2527 and S2530 each carry phosphoserine. Residues 2532-2646 (LIEQEKQRSL…ERLSQRQMDQ (115 aa)) are a coiled coil. Disordered stretches follow at residues 2549-2605 (ANLQ…EELQ) and 2626-2776 (EREQ…EIFC). Basic and acidic residues-rich tracts occupy residues 2558–2605 (HLEE…EELQ) and 2626–2640 (EREQ…ERLS). 3 stretches are compositionally biased toward polar residues: residues 2641–2653 (QRQM…QVSN), 2665–2700 (LPNS…SISR), and 2713–2727 (SASQ…SQAP). Residues S2673 and S2692 each carry the phosphoserine modification.

Interacts with the cAMP-dependent protein kinase (PKA) holoenzyme and with the regulatory subunit PRKAR2A. Interacts with RHOA. Also interacts with RHOB and RHOC. Identified in a ternary complex with RHOA and PRKAR2A. Identified in a complex with NR3C1 and RHOA. Interacts with BRAF and KSR1. Identified in a complex with BRAF and KSR1. Component of a signaling complex containing at least AKAP13, PKN1, MAPK14, ZAK and MAP2K3. Within this complex, AKAP13 interacts directly with PKN1, which in turn recruits MAPK14, MAP2K3 and ZAK. Interacts (phosphorylated form) with YWHAB and YWHAZ. Interaction with YWHAB inhibits activation of RHOA, interferes with PKN1 binding and activation of MAP kinases. Interacts with GNA12. Interacts with IKBKB. Interacts with ESR1, THRA, PPARA and NME2. Interacts (via the C-terminal domain after the PH domain) with MEF2C and RXRB. Interacts (via the C-terminal domain after the PH domain) with PRKD1. Detected in embryonic heart, limb bud, first branchial arch and forebrain (at protein level). Detected in heart. Detected in perichondrium, but not in the bone growth plate.

It localises to the cytoplasm. The protein resides in the cytosol. The protein localises to the cell cortex. It is found in the cytoskeleton. Its subcellular location is the nucleus. It localises to the membrane. Scaffold protein that plays an important role in assembling signaling complexes downstream of several types of G protein-coupled receptors. Activates RHOA in response to signaling via G protein-coupled receptors via its function as Rho guanine nucleotide exchange factor. May also activate other Rho family members. Part of a kinase signaling complex that links ADRA1A and ADRA1B adrenergic receptor signaling to the activation of downstream p38 MAP kinases, such as MAPK11 and MAPK14. Part of a signaling complex that links ADRA1B signaling to the activation of RHOA and IKBKB/IKKB, leading to increased NF-kappa-B transcriptional activity. Part of a RHOA-dependent signaling cascade that mediates responses to lysophosphatidic acid (LPA), a signaling molecule that activates G-protein coupled receptors and potentiates transcriptional activation of the glucocorticoid receptor NR3C1. Part of a signaling cascade that stimulates MEF2C-dependent gene expression in response to lysophosphatidic acid (LPA). Part of a signaling pathway that activates MAPK11 and/or MAPK14 and leads to increased transcription activation of the estrogen receptors ESR1 and ESR2. Part of a signaling cascade that links cAMP and EGFR signaling to BRAF signaling and to PKA-mediated phosphorylation of KSR1, leading to the activation of downstream MAP kinases, such as MAPK1 or MAPK3. Functions as a scaffold protein that anchors cAMP-dependent protein kinase (PKA) and PRKD1. This promotes activation of PRKD1, leading to increased phosphorylation of HDAC5 and ultimately cardiomyocyte hypertrophy. Has no guanine nucleotide exchange activity on CDC42, Ras or Rac. Required for normal embryonic heart development, and in particular for normal sarcomere formation in the developing cardiomyocytes. Plays a role in cardiomyocyte growth and cardiac hypertrophy in response to activation of the beta-adrenergic receptor by phenylephrine or isoproterenol. Required for normal adaptive cardiac hypertrophy in response to pressure overload. Plays a role in osteogenesis. The chain is A-kinase anchor protein 13 from Mus musculus (Mouse).